An 826-amino-acid polypeptide reads, in one-letter code: E3 ubiquitin-protein ligase SH3RF1 (826 aa).

An RING-type zinc finger spans residues 12-53 (CPVCLERLDASAKVLPCQHTFCKRCLLGIVSSRKELRCPECR). Residues 80-130 (PRKAGDGGSAGNSTNALRAQGSVTTNGGLNDAQNTQSGQQRIQARSPPVRG) are disordered. Polar residues predominate over residues 90–122 (GNSTNALRAQGSVTTNGGLNDAQNTQSGQQRIQ). SH3 domains lie at 132-191 (PQLP…IIKP) and 194-257 (QPPP…FNSA). The interval 266–319 (KPSGADTGEGSSGTSHSGNSQKQADAKKNTKKRHSFTSLTMSNKSSQSVQNRHS) is disordered. Positions 273 to 285 (GEGSSGTSHSGNS) are enriched in low complexity. Residues 301-317 (FTSLTMSNKSSQSVQNR) are compositionally biased toward polar residues. Positions 398-459 (ARPSVFIAIY…PGNYVAPVTR (62 aa)) constitute an SH3 3 domain. Disordered stretches follow at residues 647 to 694 (NSAA…QTNS) and 725 to 759 (DSVSASTPAQDNRKPASLDNNIPIAPPPRQPCSSL). Positions 652-663 (KQDKDSKKEKKG) are enriched in basic and acidic residues. The SH3 4 domain maps to 767–826 (RPCERYRVMVSYPPQSEAELELKEGDIVFVHKKREDGWFKGTLQRNGKTGLFPGSFVENI).

Belongs to the SH3RF family. Autoubiquitinated. Ubiquitinated by SH3RF2, leading to proteasome-mediated degradation.

The protein resides in the cytoplasm. It is found in the perinuclear region. The protein localises to the cell projection. It localises to the lamellipodium. Its subcellular location is the golgi apparatus. The protein resides in the trans-Golgi network. The catalysed reaction is S-ubiquitinyl-[E2 ubiquitin-conjugating enzyme]-L-cysteine + [acceptor protein]-L-lysine = [E2 ubiquitin-conjugating enzyme]-L-cysteine + N(6)-ubiquitinyl-[acceptor protein]-L-lysine.. It functions in the pathway protein modification; protein ubiquitination. In terms of biological role, has E3 ubiquitin-protein ligase activity. In the absence of an external substrate, it can catalyze self-ubiquitination. Acts as a scaffold protein that contributes to the effective activation of the JNK signaling pathway. Plays an essential role in the anterior neural development. The chain is E3 ubiquitin-protein ligase SH3RF1 (sh3rf1) from Xenopus laevis (African clawed frog).